Consider the following 359-residue polypeptide: Membrane-bound lytic murein transglycosylase C (359 aa).

Residues Met1–Ser16 form the signal peptide. Cys17 carries N-palmitoyl cysteine lipidation. Cys17 is lipidated: S-diacylglycerol cysteine.

Belongs to the transglycosylase Slt family.

The protein resides in the cell outer membrane. The enzyme catalyses Exolytic cleavage of the (1-&gt;4)-beta-glycosidic linkage between N-acetylmuramic acid (MurNAc) and N-acetylglucosamine (GlcNAc) residues in peptidoglycan, from either the reducing or the non-reducing ends of the peptidoglycan chains, with concomitant formation of a 1,6-anhydrobond in the MurNAc residue.. Its function is as follows. Murein-degrading enzyme. May play a role in recycling of muropeptides during cell elongation and/or cell division. The chain is Membrane-bound lytic murein transglycosylase C from Escherichia coli O8 (strain IAI1).